The sequence spans 5762 residues: Mucin-5B (5762 aa).

The signal sequence occupies residues 1-25; sequence MGAPSACRTLVLALAAMLVVPQAET. The tract at residues 27 to 50 is disordered; the sequence is GPVEPSWENAGHTMDGGAPTSSPT. The VWFD 1 domain occupies 75 to 245; the sequence is RVCSTWGDFH…KLDGPTEQCP (171 aa). 2 disulfides stabilise this stretch: C77-C207 and C99-C244. N145 carries an N-linked (GlcNAc...) asparagine glycan. E194 is a Cu(2+) binding site. N-linked (GlcNAc...) asparagine glycosylation is found at N201 and N254. H311 and H358 together coordinate Cu(2+). Residues 329–385 enclose the TIL 1 domain; it reads CPLNMQHQECGSPCTDTCSNPQRAQLCEDHCVDGCFCPPGTVLDDITHSGCLPLGQC. Residue N401 is glycosylated (N-linked (GlcNAc...) asparagine). The VWFD 2 domain maps to 423 to 598; sequence GTCSVQGGAH…NTWKAQAACA (176 aa). Cystine bridges form between C425–C562, C447–C597, and C469–C477. N-linked (GlcNAc...) asparagine glycosylation is present at N515. 2 TIL domains span residues 695-752 and 805-855; these read CPKS…AQEC and NSSA…EEDC. N805 is a glycosylation site (N-linked (GlcNAc...) asparagine). Residues 855–927 form the VWFC 1 domain; that stretch reads CPCVHNEATY…EYILAQDYCG (73 aa). The region spanning 893–1062 is the VWFD 3 domain; the sequence is GTCVAYGDGH…NSWKLSPSCP (170 aa). Intrachain disulfides connect C895/C1026, C917/C1061, C926/C1023, and C944/C951. N929 carries an N-linked (GlcNAc...) asparagine glycan. 2 N-linked (GlcNAc...) asparagine glycosylation sites follow: N1276 and N1292. A Cys-rich subdomain 1 repeat occupies 1333-1432; it reads CVREVCRWSS…RVLCCEYVPC (100 aa). Residues 1333 to 4228 form a 7 X Cys-rich subdomain repeats region; the sequence is CVREVCRWSS…RVFCCNYGHC (2896 aa). A glycan (C-linked (Man) tryptophan) is linked at W1340. Disordered stretches follow at residues 1437–1462 and 1480–1502; these read APGTSPQPSLSASTEPAVPTPTQTTA and LTSQTGSSSGPVTVTPSAPGTTT. Positions 1450–1462 are enriched in low complexity; that stretch reads TEPAVPTPTQTTA. The Cys-rich subdomain 2 repeat unit spans residues 1503–1604; sequence CQPRCQWTEW…VLCCSDDHCR (102 aa). W1509 is a glycosylation site (C-linked (Man) tryptophan). N1556 carries an N-linked (GlcNAc...) asparagine glycan. The segment at 1607-1783 is disordered; that stretch reads ATTPPPTTEL…NTTTSQGTTR (177 aa). Residues 1614 to 1624 are compositionally biased toward low complexity; it reads TELETATTTTT. 2 stretches are compositionally biased toward polar residues: residues 1625-1638 and 1645-1662; these read QALFSTPQPTSSPG and ASTTAVPTLSEGLTSPRY. Residues 1663–1684 are compositionally biased toward low complexity; that stretch reads TSTLGTATTGGPTTPAGSTEPT. The span at 1689-1706 shows a compositional bias: polar residues; sequence ATSTLPTRSALPGTTGSL. 2 stretches are compositionally biased toward low complexity: residues 1739 to 1756 and 1765 to 1777; these read EPLTTSLAPTLTSELSTS and TETTMSPLTNTTT. N1774 carries N-linked (GlcNAc...) asparagine glycosylation. The stretch at 1784–1885 is one Cys-rich subdomain 3 repeat; that stretch reads CQPKCEWTEW…VLCCDDYSHC (102 aa). C-linked (Man) tryptophan glycosylation is present at W1790. A compositionally biased stretch (low complexity) spans 1890-1987; the sequence is ATSSTATPSS…TSVTPIPSSS (98 aa). 4 disordered regions span residues 1890 to 2019, 2031 to 2100, 2114 to 2211, and 2242 to 2302; these read ATSS…TAHT, GATG…GTTH, TGSM…HTVR, and TGTT…SSPT. Residues 1890 to 2199 form an 11 X approximate tandem repeats, Ser/Thr-rich region; the sequence is ATSSTATPSS…VPNTMATTHG (310 aa). The segment covering 1988 to 1997 has biased composition (polar residues); it reads LGTTWTRLSQ. The segment covering 1998–2019 has biased composition (low complexity); sequence TTTPTATMSTATPSSTPETAHT. The span at 2114 to 2181 shows a compositional bias: low complexity; sequence TGSMATPSSS…TSNTVTPSSA (68 aa). Positions 2182–2199 are enriched in polar residues; sequence LGTTHTPPVPNTMATTHG. The stretch at 2313 to 2414 is one Cys-rich subdomain 4 repeat; sequence GCEPQCAWSE…RVFCCNYGHC (102 aa). C-linked (Man) tryptophan glycosylation is present at W2320. The 11 X approximate tandem repeats, Ser/Thr-rich stretch occupies residues 2419–2756; sequence ATSSTAMPSS…VPNTTATTHG (338 aa). Disordered regions lie at residues 2443 to 2462, 2473 to 2522, and 2556 to 2861; these read ATTTESTGSTATPSSTPGTT, TVTV…ATAL, and TTPT…PTSA. The segment covering 2556–2738 has biased composition (low complexity); it reads TTPTATMSTA…TSSTVTPSSA (183 aa). The span at 2739–2786 shows a compositional bias: polar residues; sequence LGTTHTPPVPNTTATTHGRSLSPSSPHTVRTAWTSATSGTLGTTHITE. The N-linked (GlcNAc...) asparagine glycan is linked to N2749. Residues 2787–2861 are compositionally biased toward low complexity; sequence PSTGTSHTPA…TLLPSSPTSA (75 aa). The HAT 1 repeat unit spans residues 2854–2886; sequence LPSSPTSAPITTVVTMGCEPQCAWSEWLDYSYP. Residues 2871 to 2971 form a Cys-rich subdomain 5 repeat; that stretch reads CEPQCAWSEW…RVFCCNYGHC (101 aa). A C-linked (Man) tryptophan glycan is attached at W2877. A 17 X approximate tandem repeats, Ser/Thr-rich region spans residues 2976–3456; that stretch reads ATSSTATPSS…VPNTTATTHG (481 aa). 2 stretches are compositionally biased toward low complexity: residues 3001 to 3017 and 3026 to 3049; these read TTTATTGSTAIPSSTPG and TSTATTPTATSSKATSSSSPRTAT. Disordered regions lie at residues 3001–3049, 3256–3357, 3371–3469, and 3481–3561; these read TTTA…RTAT, TTPT…GTTH, TGSM…TVRT, and TTHI…PTSA. Residues 3371 to 3438 are compositionally biased toward low complexity; it reads TGSMATPSSS…TSSTVTPSSA (68 aa). A compositionally biased stretch (polar residues) spans 3439-3456; sequence LGTTHTPPVPNTTATTHG. N3449 carries an N-linked (GlcNAc...) asparagine glycan. Low complexity predominate over residues 3487–3561; the sequence is PSTVTSHTPA…TLLPSSPTSA (75 aa). Residues 3554–3586 form an HAT 2 repeat; it reads LPSSPTSAPITTVVTTGCEPQCAWSEWLDYSYP. One copy of the Cys-rich subdomain 6 repeat lies at 3571 to 3671; that stretch reads CEPQCAWSEW…RVFCCNYGHC (101 aa). A C-linked (Man) tryptophan glycan is attached at W3577. The interval 3676 to 4013 is 11 X approximate tandem repeats, Ser/Thr-rich; the sequence is ATSSTATPSS…VPNTTATTHG (338 aa). 3 disordered regions span residues 3699 to 3779, 3813 to 3917, and 3956 to 4118; these read TATT…ATAL, TTPT…HTPT, and ATGS…PTSA. The segment covering 3956 to 3995 has biased composition (low complexity); it reads ATGSTTNPSSTPGTTPIPPVLTTTATTPAATSSTVTPSSA. Positions 3996-4043 are enriched in polar residues; sequence LGTTHTPPVPNTTATTHGRSLSPSSPHTVRTAWTSATSGTLGTTHITE. N4006 carries an N-linked (GlcNAc...) asparagine glycan. A compositionally biased stretch (low complexity) spans 4044-4118; that stretch reads PSTGTSHTPA…TLLPSSPTSA (75 aa). An HAT 3 repeat occupies 4111–4143; it reads LPSSPTSAPITTVVTTGCEPQCAWSEWLDYSYP. The stretch at 4128-4228 is one Cys-rich subdomain 7 repeat; sequence CEPQCAWSEW…RVFCCNYGHC (101 aa). A C-linked (Man) tryptophan glycan is attached at W4134. Residues 4233–4879 are 23 X approximate tandem repeats, Ser/Thr-rich; sequence ATSSTAMPSS…TLGTAHTPKV (647 aa). Composition is skewed to low complexity over residues 4259-4274 and 4283-4389; these read TTASTGSTATPSSTPG and TSPA…PGTT. Disordered regions lie at residues 4259 to 4389, 4428 to 4447, 4458 to 4527, and 4541 to 4750; these read TTAS…PGTT, ATTTASTGSTATPSSTPGTT, TVTV…AIPS, and TTPT…ATSF. N4804, N4960, N5017, N5024, N5046, N5096, and N5111 each carry an N-linked (GlcNAc...) asparagine glycan. Residues 5073–5261 enclose the VWFD 4 domain; it reads CICSMWGGSH…VPDSRKDGCW (189 aa). 3 cysteine pairs are disulfide-bonded: C5075/C5221, C5097/C5260, and C5121/C5132. N-linked (GlcNAc...) asparagine glycosylation is present at N5215. Residues 5412 to 5484 enclose the VWFC 2 domain; it reads CPCVGPDGFP…NPCCPETVCV (73 aa). N-linked (GlcNAc...) asparagine glycosylation is found at N5486, N5526, N5565, N5566, N5602, N5612, N5663, N5677, and N5721. One can recognise a VWFC 3 domain in the interval 5521–5587; it reads QLCSYNGTFY…VAGQCCGECV (67 aa). 4 disulfide bridges follow: C5653/C5705, C5672/C5719, C5681/C5735, and C5685/C5737. The region spanning 5653–5742 is the CTCK domain; the sequence is CEEDSCQVRI…DECGCTPFCV (90 aa).

In terms of assembly, homomultimer; disulfide-linked. The N- and C-terminus mediate their assembly into higher order structures to form filaments. The CTCK domains of two polypeptides associate in the endoplasmic reticulum to generate intermolecularly disulfide-bonded dimers. These dimers progress to the Golgi apparatus, which is a more acidic environment than the endoplasmic reticulum. Under acidic conditions, the N-termini form non-covalent intermolecular interactions that juxtapose assemblies from different CTCK-linked dimers to produce long, disulfide-linked polymers that remain highly compact until secretion. Post-translationally, highly glycosylated. C-, N- and O-glycosylated. C-mannosylated in the Cys-rich subdomains probably on the first Trp residue of the WXXW motif. Highly O-glycosylated in the Ser/Thr-rich tandem repeat (TR) region. The repeat region is about 59% O-glycosylated with a high abundance of NeuAc(2)Hex(1)HexNac1-ol. In terms of tissue distribution, expressed on surface airway epithelia. Expressed mainly in mucous cells of submucosal glands of airway tissues. Highly expressed in the sublingual gland. Also found in submaxillary glands, endocervix, gall bladder, and pancreas.

It localises to the secreted. Its function is as follows. Gel-forming mucin that is thought to contribute to the lubricating and viscoelastic properties of whole saliva and cervical mucus. This Homo sapiens (Human) protein is Mucin-5B (MUC5B).